Here is a 666-residue protein sequence, read N- to C-terminus: Probable potassium transport system protein Kup (666 aa).

12 consecutive transmembrane segments (helical) span residues 16–36 (GFII…LYTM), 58–78 (ISLI…LIAL), 100–120 (PWLI…GALT), 141–161 (IYQN…VLFG), 165–185 (FGTG…FSFL), 221–241 (IFIL…YSDL), 253–273 (WPFV…WILA), 294–314 (VYLV…LISG), 343–363 (LYIP…VLAF), 373–393 (YGLA…YYLI), 399–419 (PILA…FFLA), and 424–444 (FMHG…VMFI).

Belongs to the HAK/KUP transporter (TC 2.A.72) family.

It localises to the cell membrane. It carries out the reaction K(+)(in) + H(+)(in) = K(+)(out) + H(+)(out). Functionally, transport of potassium into the cell. Likely operates as a K(+):H(+) symporter. The protein is Probable potassium transport system protein Kup of Streptococcus pyogenes serotype M49 (strain NZ131).